An 842-amino-acid polypeptide reads, in one-letter code: Alanine--tRNA ligase (842 aa).

Zn(2+) contacts are provided by His-549, His-553, Cys-650, and His-654.

This sequence belongs to the class-II aminoacyl-tRNA synthetase family. The cofactor is Zn(2+).

The protein resides in the cytoplasm. The enzyme catalyses tRNA(Ala) + L-alanine + ATP = L-alanyl-tRNA(Ala) + AMP + diphosphate. In terms of biological role, catalyzes the attachment of alanine to tRNA(Ala) in a two-step reaction: alanine is first activated by ATP to form Ala-AMP and then transferred to the acceptor end of tRNA(Ala). Also edits incorrectly charged Ser-tRNA(Ala) and Gly-tRNA(Ala) via its editing domain. The protein is Alanine--tRNA ligase of Campylobacter jejuni subsp. jejuni serotype O:23/36 (strain 81-176).